The following is a 71-amino-acid chain: Large ribosomal subunit protein bL31 (71 aa).

Zn(2+)-binding residues include cysteine 16, cysteine 18, cysteine 37, and cysteine 40.

It belongs to the bacterial ribosomal protein bL31 family. Type A subfamily. Part of the 50S ribosomal subunit. It depends on Zn(2+) as a cofactor.

Its function is as follows. Binds the 23S rRNA. This is Large ribosomal subunit protein bL31 from Wigglesworthia glossinidia brevipalpis.